The sequence spans 398 residues: MAKEKYDRSKPHVNIGTIGHVDHGKTTLTAAITTVLARRLPTSVNQPKDYASIDAAPEERERGITINTAHVEYETEKRHYAHIDAPGHADYVKNMITGAAQMDGAILVVASTDGPMPQTREHILLSRQVGVKHLIVFMNKVDLVDDEELLELVEMEIRDLLSEYDFPGDDLPVIQGSALKALEGDEKYEDIIMELMSTVDEYIPEPERDTDKPLLLPVEDVFSITGRGTVASGRIDRGTVRVNDEVEIVGIKEDIQKAVVTGVEMFRKQLDEGLAGDNVGVLLRGVQRDEIERGQVLAKPGSINPHTKFKGEVYILSKEEGGRHTPFFNNYRPQFYFRTTDVTGSIELPAGTEMVMPGDNVTIEVELIHPIAVEQGTTFSIREGGRTVGSGIVSEIEA.

The tr-type G domain occupies 10–207; sequence KPHVNIGTIG…TVDEYIPEPE (198 aa). Residues 19-26 form a G1 region; sequence GHVDHGKT. 19–26 is a GTP binding site; sequence GHVDHGKT. Thr-26 provides a ligand contact to Mg(2+). A G2 region spans residues 63–67; that stretch reads GITIN. The G3 stretch occupies residues 84 to 87; it reads DAPG. GTP-binding positions include 84–88 and 139–142; these read DAPGH and NKVD. Residues 139-142 are G4; the sequence is NKVD. Residues 177 to 179 form a G5 region; the sequence is SAL.

It belongs to the TRAFAC class translation factor GTPase superfamily. Classic translation factor GTPase family. EF-Tu/EF-1A subfamily. In terms of assembly, monomer.

It localises to the cytoplasm. The catalysed reaction is GTP + H2O = GDP + phosphate + H(+). In terms of biological role, GTP hydrolase that promotes the GTP-dependent binding of aminoacyl-tRNA to the A-site of ribosomes during protein biosynthesis. The protein is Elongation factor Tu of Streptococcus agalactiae serotype Ia (strain ATCC 27591 / A909 / CDC SS700).